The following is a 279-amino-acid chain: 4-diphosphocytidyl-2-C-methyl-D-erythritol kinase (279 aa).

K11 is an active-site residue. 95–105 (PVAAGLGGGSS) is an ATP binding site. The active site involves D137.

Belongs to the GHMP kinase family. IspE subfamily.

It catalyses the reaction 4-CDP-2-C-methyl-D-erythritol + ATP = 4-CDP-2-C-methyl-D-erythritol 2-phosphate + ADP + H(+). It participates in isoprenoid biosynthesis; isopentenyl diphosphate biosynthesis via DXP pathway; isopentenyl diphosphate from 1-deoxy-D-xylulose 5-phosphate: step 3/6. In terms of biological role, catalyzes the phosphorylation of the position 2 hydroxy group of 4-diphosphocytidyl-2C-methyl-D-erythritol. This is 4-diphosphocytidyl-2-C-methyl-D-erythritol kinase from Geotalea daltonii (strain DSM 22248 / JCM 15807 / FRC-32) (Geobacter daltonii).